Reading from the N-terminus, the 82-residue chain is Small ribosomal subunit protein bS20 (82 aa).

Belongs to the bacterial ribosomal protein bS20 family.

Its function is as follows. Binds directly to 16S ribosomal RNA. The polypeptide is Small ribosomal subunit protein bS20 (Streptococcus pyogenes serotype M12 (strain MGAS2096)).